The primary structure comprises 204 residues: Recombination protein RecR (204 aa).

The segment at 58–75 (CSICQNVTDRGDDPCSIC) adopts a C4-type zinc-finger fold. In terms of domain architecture, Toprim spans 83–181 (SKICVVESPP…EVTKIARGIP (99 aa)).

The protein belongs to the RecR family.

In terms of biological role, may play a role in DNA repair. It seems to be involved in an RecBC-independent recombinational process of DNA repair. It may act with RecF and RecO. The protein is Recombination protein RecR of Chlorobium phaeobacteroides (strain BS1).